Consider the following 1493-residue polypeptide: Sister chromatid cohesion protein 2 (1493 aa).

Ser-43 carries the post-translational modification Phosphoserine; in mutant scc2-8A. Thr-67 bears the Phosphothreonine mark. Residue Ser-74 is modified to Phosphoserine; in mutant scc2-8A. 2 positions are modified to phosphoserine: Ser-127 and Ser-157. The interval Ser-151 to Ser-170 is disordered. At Ser-162 the chain carries Phosphoserine; in mutant scc2-8A. Ser-163 is subject to Phosphoserine. Phosphothreonine is present on residues Thr-231 and Thr-236. Phosphoserine is present on residues Ser-305 and Ser-320. Thr-360 carries the phosphothreonine; in mutant scc2-8A modification. HEAT repeat units lie at residues Asn-695–Val-732, Leu-734–Phe-771, Thr-806–Glu-843, and Phe-1132–Arg-1169. The residue at position 753 (Ser-753) is a Phosphoserine. Position 1179 is a phosphoserine; in mutant scc2-8A (Ser-1179). At Ser-1182 the chain carries Phosphoserine. Ser-1183 carries the post-translational modification Phosphoserine; in mutant scc2-8A. The residue at position 1185 (Ser-1185) is a Phosphoserine. The stretch at Thr-1244–Thr-1281 is one HEAT 5 repeat.

It belongs to the SCC2/Nipped-B family. In terms of assembly, interacts with SCC4. Interacts with the cohesin complex, which is composed of: the SMC1 and SMC3 heterodimer attached via their hinge domain, MCD1/SCC1 which link them, and IRR1/SCC3, which interacts with MCD1. Post-translationally, phosphorylated at alternative sites Ser-43, Ser-74, Ser-162, Thr-360, Ser-1179 and Ser-1183 when the principal phosphorylation sites Thr-67, Ser-127, Ser-157, Ser-163, Thr-231, Thr-236, Ser-305 and Ser-320 are mutated to alanines.

The protein resides in the nucleus. It is found in the chromosome. It localises to the centromere. Its function is as follows. Plays a structural role in chromatin and is involved in sister chromatid cohesion. Forms a complex with SCC4 required for the stable association of the cohesin complex with chromatin, which may act by hydrolyzing ATP from SMC1 and SMC3 heads. Binds to the nucleosome-free promoter regions of ribosomal protein genes and tRNA genes. Involved in transcriptional regulation by cooperating with the RSC complex to maintain nucleosome exhaustion at its binding sites. The sequence is that of Sister chromatid cohesion protein 2 (SCC2) from Saccharomyces cerevisiae (strain ATCC 204508 / S288c) (Baker's yeast).